We begin with the raw amino-acid sequence, 457 residues long: RNA-binding suppressor of PAS kinase protein 1 (457 aa).

The region spanning 26–88 (RIFIIELENS…SCVILFKGEN (63 aa)) is the R3H domain. Disordered regions lie at residues 142 to 181 (IDGN…IEKE), 195 to 291 (LNKS…NGGY), and 406 to 457 (FQGK…KLNI). The span at 145–158 (NTRTPNSNLTANSN) shows a compositional bias: polar residues. The segment covering 159–181 (KDQKIEIDDKSSTDLEQERIEKE) has biased composition (basic and acidic residues). S198 bears the Phosphoserine mark. A compositionally biased stretch (low complexity) spans 226–247 (SNTQTSNGSVSSSSPFNSSVTT). The span at 248 to 258 (IQVNKPQQQFY) shows a compositional bias: polar residues. The segment covering 418 to 435 (KRSDDSNSNKNEGIRRAS) has biased composition (basic and acidic residues). A phosphoserine mark is found at S435, S439, and S447. The segment covering 443–457 (RDTDSVEMKFDKLNI) has biased composition (basic and acidic residues).

It is found in the cytoplasm. This is RNA-binding suppressor of PAS kinase protein 1 (RBS1) from Saccharomyces cerevisiae (strain ATCC 204508 / S288c) (Baker's yeast).